Here is a 465-residue protein sequence, read N- to C-terminus: ATP synthase subunit beta (465 aa).

An ATP-binding site is contributed by 152–159; it reads GGAGVGKT.

This sequence belongs to the ATPase alpha/beta chains family. F-type ATPases have 2 components, CF(1) - the catalytic core - and CF(0) - the membrane proton channel. CF(1) has five subunits: alpha(3), beta(3), gamma(1), delta(1), epsilon(1). CF(0) has three main subunits: a(1), b(2) and c(9-12). The alpha and beta chains form an alternating ring which encloses part of the gamma chain. CF(1) is attached to CF(0) by a central stalk formed by the gamma and epsilon chains, while a peripheral stalk is formed by the delta and b chains.

The protein localises to the cell inner membrane. It catalyses the reaction ATP + H2O + 4 H(+)(in) = ADP + phosphate + 5 H(+)(out). Functionally, produces ATP from ADP in the presence of a proton gradient across the membrane. The catalytic sites are hosted primarily by the beta subunits. The polypeptide is ATP synthase subunit beta (Campylobacter jejuni subsp. jejuni serotype O:6 (strain 81116 / NCTC 11828)).